The sequence spans 89 residues: MAISKEKKNEIMAQYARHEGDTGSVEVQVAVLTWEINHLNDHIKQHKKDHATYRGLMKKIGRRRNLLAYLRRTDVNRYRELIHSLGLRR.

Belongs to the universal ribosomal protein uS15 family. Part of the 30S ribosomal subunit. Forms a bridge to the 50S subunit in the 70S ribosome, contacting the 23S rRNA.

In terms of biological role, one of the primary rRNA binding proteins, it binds directly to 16S rRNA where it helps nucleate assembly of the platform of the 30S subunit by binding and bridging several RNA helices of the 16S rRNA. Functionally, forms an intersubunit bridge (bridge B4) with the 23S rRNA of the 50S subunit in the ribosome. The chain is Small ribosomal subunit protein uS15 from Streptococcus suis (strain 98HAH33).